Here is a 38-residue protein sequence, read N- to C-terminus: RapG inhibitor (38 aa).

The propeptide occupies 1-33 (MKRFLIGAGVAAVILSGWFIADHQTHSQEMKVA).

This sequence belongs to the Phr family. In terms of processing, contains a predicted signal peptide cleavage site in the N-terminal region, however the propeptide is probably subject to only one processing event, at the N-terminal end of the mature peptide.

It is found in the secreted. The protein resides in the cytoplasm. In terms of biological role, signaling molecule involved in the regulation of expression of DegU-controlled genes. Secreted during production, but the mature peptide acts intracellularly, indicating that it needs to be imported into the cell to function. Stimulates the DegU-dependent expression of aprE, an extracellular alkaline protease. Acts by inhibiting RapG activity. At high concentrations, represses the DegS-dependent aprE expression. The protein is RapG inhibitor (phrG) of Bacillus subtilis (strain 168).